Here is a 358-residue protein sequence, read N- to C-terminus: Metacaspase-3 (358 aa).

The interval 1 to 84 (MGFDFGCLLK…APTHVSGTFR (84 aa)) is important for catalytic activity. Active-site residues include His-168 and Cys-223.

The protein belongs to the peptidase C14B family. In terms of processing, in epimastigotes, the unprocessed enzyme appears to be the main form. Auto-processing is dispensable for catalytic activity towards small oligopeptide substrates.

It localises to the cytoplasm. It is found in the nucleus. Its activity is regulated as follows. Activated by Ca(2+). Functionally, cysteine protease that cleaves specifically after arginine or lysine residues. In epimastigotes, may play a role in cell cycle G1/S transition. This Trypanosoma cruzi (strain CL Brener) protein is Metacaspase-3.